The chain runs to 696 residues: SEC14 domain and spectrin repeat-containing protein 1 (696 aa).

A CRAL-TRIO domain is found at 1 to 153; it reads MEASVILPIL…DFGGSLTYDH (153 aa). Spectrin repeat units follow at residues 275–378, 381–494, and 500–602; these read EEIQ…NLLQ, LEFH…LKML, and FKCE…HRLE.

This sequence belongs to the SOLO family. Interacts (via the spectrin 1 repeat) with TRPC4 and TRPC5 (via CIRB domain). Interacts with CTNNB1.

In terms of biological role, may act as the primary docking protein directing membrane turnover and assembly of the transient receptor potential channels TRPC4 and TRPC5. Binds phospholipids such as phosphatidylinositol monophosphates, phosphatidylinositol diphosphates (PIP2s) and phosphatidic acid, but not less polar lipids including phosphatidylcholine, phosphatidylserine, and phosphatidylinositol. The binding to PIP2s is calcium dependent. Might be involved in the plasma membrane localization of CTNNB1. The polypeptide is SEC14 domain and spectrin repeat-containing protein 1 (Sestd1) (Mus musculus (Mouse)).